We begin with the raw amino-acid sequence, 182 residues long: Glutamyl-tRNA(Gln) amidotransferase subunit F, mitochondrial (182 aa).

Belongs to the GatF family. In terms of assembly, subunit of the heterotrimeric GatFAB amidotransferase (AdT) complex, composed of A, B and F subunits.

It localises to the mitochondrion inner membrane. It carries out the reaction L-glutamyl-tRNA(Gln) + L-glutamine + ATP + H2O = L-glutaminyl-tRNA(Gln) + L-glutamate + ADP + phosphate + H(+). Allows the formation of correctly charged Gln-tRNA(Gln) through the transamidation of misacylated Glu-tRNA(Gln) in the mitochondria. The reaction takes place in the presence of glutamine and ATP through an activated gamma-phospho-Glu-tRNA(Gln). Required for proper protein synthesis within the mitochondrion. This Candida tropicalis (strain ATCC MYA-3404 / T1) (Yeast) protein is Glutamyl-tRNA(Gln) amidotransferase subunit F, mitochondrial.